The following is a 249-amino-acid chain: Metallo-beta-lactamase type 2 (249 aa).

The N-terminal stretch at 1–22 (MMKKMKWALVLALGLTGLNAFG) is a signal peptide. 5 residues coordinate Zn(2+): His98, His100, Asp102, His161, and Cys180. Residue Lys183 participates in substrate binding. His222 serves as a coordination point for Zn(2+).

Belongs to the metallo-beta-lactamase superfamily. Class-B beta-lactamase family. Monomer. Zn(2+) is required as a cofactor.

It is found in the periplasm. The enzyme catalyses a beta-lactam + H2O = a substituted beta-amino acid. Its function is as follows. Confers resistance to the different beta-lactams antibiotics (penicillin, cephalosporin and carbapenem) via the hydrolysis of the beta-lactam ring. The sequence is that of Metallo-beta-lactamase type 2 (blaB4) from Elizabethkingia meningoseptica (Chryseobacterium meningosepticum).